The following is a 308-amino-acid chain: Ribosomal RNA large subunit methyltransferase F (308 aa).

It belongs to the methyltransferase superfamily. METTL16/RlmF family.

Its subcellular location is the cytoplasm. It catalyses the reaction adenosine(1618) in 23S rRNA + S-adenosyl-L-methionine = N(6)-methyladenosine(1618) in 23S rRNA + S-adenosyl-L-homocysteine + H(+). Specifically methylates the adenine in position 1618 of 23S rRNA. In Salmonella paratyphi A (strain ATCC 9150 / SARB42), this protein is Ribosomal RNA large subunit methyltransferase F.